A 237-amino-acid polypeptide reads, in one-letter code: Ribonuclease PH (237 aa).

Phosphate-binding positions include arginine 86 and 124–126; that span reads GTR.

Belongs to the RNase PH family. In terms of assembly, homohexameric ring arranged as a trimer of dimers.

The enzyme catalyses tRNA(n+1) + phosphate = tRNA(n) + a ribonucleoside 5'-diphosphate. Its function is as follows. Phosphorolytic 3'-5' exoribonuclease that plays an important role in tRNA 3'-end maturation. Removes nucleotide residues following the 3'-CCA terminus of tRNAs; can also add nucleotides to the ends of RNA molecules by using nucleoside diphosphates as substrates, but this may not be physiologically important. Probably plays a role in initiation of 16S rRNA degradation (leading to ribosome degradation) during starvation. In Tolumonas auensis (strain DSM 9187 / NBRC 110442 / TA 4), this protein is Ribonuclease PH.